The sequence spans 341 residues: Two-component response regulator EHD1 (341 aa).

The region spanning 12–127 (RVLVIDDDCS…ELSNIWQHIF (116 aa)) is the Response regulatory domain. Asp63 is modified (4-aspartylphosphate). One can recognise an HTH myb-type domain in the interval 195–254 (DLGKSRLTWTTQLHRQFIAAVNHLGEDKAVPKKILGIMKVKHLTREQVASHLQKYRMQLK). The segment at residues 225–250 (PKKILGIMKVKHLTREQVASHLQKYR) is a DNA-binding region (H-T-H motif).

Two-component system major event consists of a His-to-Asp phosphorelay between a sensor histidine kinase (HK) and a response regulator (RR). In plants, the His-to-Asp phosphorelay involves an additional intermediate named Histidine-containing phosphotransfer protein (HPt). This multistep phosphorelay consists of a His-Asp-His-Asp sequential transfer of a phosphate group between first a His and an Asp of the HK protein, followed by the transfer to a conserved His of the HPt protein and finally the transfer to an Asp in the receiver domain of the RR protein.

The protein localises to the nucleus. Functionally, transcriptional activator that acts as a floral inducer to promote short-day (SD) flowering pathway. Activates Hd3a and other FT-like genes independently from Hd1. May also activate MADS-box transcription factors involved in flowering regulation. In Oryza sativa subsp. indica (Rice), this protein is Two-component response regulator EHD1 (EHD1).